We begin with the raw amino-acid sequence, 215 residues long: Adenylate kinase (215 aa).

10-15 is an ATP binding site; that stretch reads GAGKGT. The tract at residues 30 to 59 is NMP; sequence STGDMFRLAIKEGTELGKKAKEFMDQGDLV. AMP-binding positions include Thr-31, Arg-36, 57-59, 85-88, and Gln-92; these read DLV and GFPR. The LID stretch occupies residues 126–163; the sequence is GRRICPTCGTAYHVVYNPPKEEGICDKDGSQLIQRDDD. Arg-127 lines the ATP pocket. The Zn(2+) site is built by Cys-130, Cys-133, Cys-150, and Asp-153. Residues Arg-160 and Arg-171 each contribute to the AMP site. An ATP-binding site is contributed by Arg-199.

The protein belongs to the adenylate kinase family. As to quaternary structure, monomer.

The protein localises to the cytoplasm. The catalysed reaction is AMP + ATP = 2 ADP. It participates in purine metabolism; AMP biosynthesis via salvage pathway; AMP from ADP: step 1/1. Functionally, catalyzes the reversible transfer of the terminal phosphate group between ATP and AMP. Plays an important role in cellular energy homeostasis and in adenine nucleotide metabolism. This Oceanobacillus iheyensis (strain DSM 14371 / CIP 107618 / JCM 11309 / KCTC 3954 / HTE831) protein is Adenylate kinase.